A 440-amino-acid chain; its full sequence is Thymidine phosphorylase (440 aa).

It belongs to the thymidine/pyrimidine-nucleoside phosphorylase family. In terms of assembly, homodimer.

The catalysed reaction is thymidine + phosphate = 2-deoxy-alpha-D-ribose 1-phosphate + thymine. It participates in pyrimidine metabolism; dTMP biosynthesis via salvage pathway; dTMP from thymine: step 1/2. Functionally, the enzymes which catalyze the reversible phosphorolysis of pyrimidine nucleosides are involved in the degradation of these compounds and in their utilization as carbon and energy sources, or in the rescue of pyrimidine bases for nucleotide synthesis. The polypeptide is Thymidine phosphorylase (Shigella flexneri serotype 5b (strain 8401)).